The chain runs to 255 residues: MTGPPAPAARPAEPDDPTVVAVERDASGRHLARELSPGAFLAPRPLLPCADRLRIALVGTRAGLLAGDDLRLHVSVGPGARLDLVEPSGLVAYDHRGGRSAWRARIDIAAGGRLDWDGKPFVVAHGAWVDRTMEVTLAPGARMLWRDTLVLGRSGERGGRVRTRTRAEYDGRELLVEDLDLTDPDIRELPGVLGPNRIVGSVTALGTRPPGPPHPYRTDLAGPGAQVRLLDTEAPAMEAELSALCEHWRTENDHA.

Belongs to the UreD family. As to quaternary structure, ureD, UreF and UreG form a complex that acts as a GTP-hydrolysis-dependent molecular chaperone, activating the urease apoprotein by helping to assemble the nickel containing metallocenter of UreC. The UreE protein probably delivers the nickel.

It localises to the cytoplasm. In terms of biological role, required for maturation of urease via the functional incorporation of the urease nickel metallocenter. The chain is Urease accessory protein UreD 1 from Streptomyces griseus subsp. griseus (strain JCM 4626 / CBS 651.72 / NBRC 13350 / KCC S-0626 / ISP 5235).